A 424-amino-acid polypeptide reads, in one-letter code: Probable ribonuclease FAU-1 (424 aa).

It belongs to the FAU-1 family.

In terms of biological role, probable RNase involved in rRNA stability through maturation and/or degradation of precursor rRNAs. Binds to RNA in loop regions with AU-rich sequences. The protein is Probable ribonuclease FAU-1 of Saccharolobus islandicus (strain Y.G.57.14 / Yellowstone #1) (Sulfolobus islandicus).